The following is a 183-amino-acid chain: Ribosome-recycling factor (183 aa).

The protein belongs to the RRF family.

Its subcellular location is the cytoplasm. Responsible for the release of ribosomes from messenger RNA at the termination of protein biosynthesis. May increase the efficiency of translation by recycling ribosomes from one round of translation to another. The sequence is that of Ribosome-recycling factor from Ureaplasma urealyticum serovar 10 (strain ATCC 33699 / Western).